The chain runs to 858 residues: Envelope glycoprotein gp160 (858 aa).

The N-terminal stretch at 1–19 (MMNQLLIAILLASACLVYC) is a signal peptide. Residues 20–679 (TQYVTVFYGV…LTSWVKYIQY (660 aa)) lie on the Extracellular side of the membrane. N-linked (GlcNAc...) asparagine; by host glycosylation occurs at Asn-34. Cys-41 and Cys-54 form a disulfide bridge. N-linked (GlcNAc...) asparagine; by host glycosylation is found at Asn-67, Asn-76, Asn-119, Asn-120, Asn-151, Asn-166, Asn-179, Asn-192, Asn-193, Asn-196, Asn-206, Asn-238, Asn-241, Asn-248, Asn-272, Asn-278, Asn-289, Asn-300, Asn-310, Asn-367, Asn-371, Asn-400, Asn-410, Asn-447, Asn-463, and Asn-466. 5 disulfides stabilise this stretch: Cys-98-Cys-214, Cys-105-Cys-205, Cys-110-Cys-163, Cys-227-Cys-257, and Cys-237-Cys-249. The tract at residues 110–162 (CSSTESSTGNNTTSKSTSTTTTTPTDQEQEISEDTPCARADNCSGLGEEETIN) is V1. A compositionally biased stretch (low complexity) spans 111 to 134 (SSTESSTGNNTTSKSTSTTTTTPT). Residues 111–142 (SSTESSTGNNTTSKSTSTTTTTPTDQEQEISE) are disordered. The tract at residues 163–205 (CQFNMTGLERDKKKQYNETWYSKDVVCETNNSTNQTQCYMNHC) is V2. The interval 305–339 (CKRPGNKTVKQIMLMSGHVFHSHYQPINKRPRQAW) is V3. Cysteines 305 and 340 form a disulfide. Intrachain disulfides connect Cys-392/Cys-446 and Cys-399/Cys-419. The interval 399–419 (CNMTWFLNWIENKTHRNYAPC) is V4. A V5 region spans residues 462-469 (NNQTNITF). Positions 512 to 532 (GVFVLGFLGFLATAGSAMGAA) are fusion peptide. The tract at residues 575–591 (LQARVTAIEKYLQDQAR) is immunosuppression. Residues Asn-611, Asn-620, and Asn-636 are each glycosylated (N-linked (GlcNAc...) asparagine; by host). Residues 624–645 (QEWEKQVRYLEANISKSLEQAQ) are a coiled coil. The segment at 657-678 (KLNSWDIFGNWFDLTSWVKYIQ) is MPER; binding to GalCer. A helical transmembrane segment spans residues 680–700 (GVLIIVAVIALRIVIYVVQML). Topologically, residues 701–858 (SRLRKGYRPV…IRQGAEIALL (158 aa)) are cytoplasmic. The short motif at 707–710 (YRPV) is the YXXV motif; contains endocytosis signal element. The S-palmitoyl cysteine; by host moiety is linked to residue Cys-773. A Di-leucine internalization motif motif is present at residues 857 to 858 (LL).

As to quaternary structure, the mature envelope protein (Env) consists of a homotrimer of non-covalently associated gp120-gp41 heterodimers. The resulting complex protrudes from the virus surface as a spike. There seems to be as few as 10 spikes on the average virion. Interacts with human CD4, CCR5 and CXCR4, to form a P4HB/PDI-CD4-CXCR4-gp120 complex. Gp120 also interacts with the C-type lectins CD209/DC-SIGN and CLEC4M/DC-SIGNR (collectively referred to as DC-SIGN(R)). Gp120 and gp41 interact with GalCer. In terms of assembly, the mature envelope protein (Env) consists of a homotrimer of non-covalently associated gp120-gp41 heterodimers. The resulting complex protrudes from the virus surface as a spike. There seems to be as few as 10 spikes on the average virion. Specific enzymatic cleavages in vivo yield mature proteins. Envelope glycoproteins are synthesized as an inactive precursor that is heavily N-glycosylated and processed likely by host cell furin in the Golgi to yield the mature SU and TM proteins. The cleavage site between SU and TM requires the minimal sequence [KR]-X-[KR]-R. Post-translationally, palmitoylation of the transmembrane protein and of Env polyprotein (prior to its proteolytic cleavage) is essential for their association with host cell membrane lipid rafts. Palmitoylation is therefore required for envelope trafficking to classical lipid rafts, but not for viral replication.

Its subcellular location is the virion membrane. The protein resides in the host cell membrane. The protein localises to the host endosome membrane. Its function is as follows. The surface protein gp120 (SU) attaches the virus to the host lymphoid cell by binding to the primary receptor CD4. This interaction induces a structural rearrangement creating a high affinity binding site for a chemokine coreceptor like CXCR4 and/or CCR5. This peculiar 2 stage receptor-interaction strategy allows gp120 to maintain the highly conserved coreceptor-binding site in a cryptic conformation, protected from neutralizing antibodies. Since CD4 also displays a binding site for the disulfide-isomerase P4HB/PDI, a P4HB/PDI-CD4-CXCR4-gp120 complex may form. In that complex, P4HB/PDI could reach and reduce gp120 disulfide bonds, causing major conformational changes in gp120. TXN, another PDI family member could also be involved in disulfide rearrangements in Env during fusion. These changes are transmitted to the transmembrane protein gp41 and are thought to activate its fusogenic potential by unmasking its fusion peptide. Functionally, the surface protein gp120 is a ligand for CD209/DC-SIGN and CLEC4M/DC-SIGNR, which are respectively found on dendritic cells (DCs), and on endothelial cells of liver sinusoids and lymph node sinuses. These interactions allow capture of viral particles at mucosal surfaces by these cells and subsequent transmission to permissive cells. DCs are professional antigen presenting cells, critical for host immunity by inducing specific immune responses against a broad variety of pathogens. They act as sentinels in various tissues where they take up antigen, process it, and present it to T-cells following migration to lymphoid organs. HIV subverts the migration properties of dendritic cells to gain access to CD4+ T-cells in lymph nodes. Virus transmission to permissive T-cells occurs either in trans (without DCs infection, through viral capture and transmission), or in cis (following DCs productive infection, through the usual CD4-gp120 interaction), thereby inducing a robust infection. In trans infection, bound virions remain infectious over days and it is proposed that they are not degraded, but protected in non-lysosomal acidic organelles within the DCs close to the cell membrane thus contributing to the viral infectious potential during DCs' migration from the periphery to the lymphoid tissues. On arrival at lymphoid tissues, intact virions recycle back to DCs' cell surface allowing virus transmission to CD4+ T-cells. Virion capture also seems to lead to MHC-II-restricted viral antigen presentation, and probably to the activation of HIV-specific CD4+ cells. In terms of biological role, the transmembrane protein gp41 (TM) acts as a class I viral fusion protein. Under the current model, the protein has at least 3 conformational states: pre-fusion native state, pre-hairpin intermediate state, and post-fusion hairpin state. During fusion of viral and target intracellular membranes, the coiled coil regions (heptad repeats) assume a trimer-of-hairpins structure, positioning the fusion peptide in close proximity to the C-terminal region of the ectodomain. The formation of this structure appears to drive apposition and subsequent fusion of viral and target cell membranes. Complete fusion occurs in host cell endosomes and is dynamin-dependent, however some lipid transfer might occur at the plasma membrane. The virus undergoes clathrin-dependent internalization long before endosomal fusion, thus minimizing the surface exposure of conserved viral epitopes during fusion and reducing the efficacy of inhibitors targeting these epitopes. Membranes fusion leads to delivery of the nucleocapsid into the cytoplasm. The envelope glycoprotein gp160 precursor down-modulates cell surface CD4 antigen by interacting with it in the endoplasmic reticulum and blocking its transport to the cell surface. Its function is as follows. The gp120-gp41 heterodimer seems to contribute to T-cell depletion during HIV-1 infection. The envelope glycoproteins expressed on the surface of infected cells induce apoptosis through an interaction with uninfected cells expressing the receptor (CD4) and the coreceptors CXCR4 or CCR5. This type of bystander killing may be obtained by at least three distinct mechanisms. First, the interaction between the 2 cells can induce cellular fusion followed by nuclear fusion within the syncytium. Syncytia are condemned to die from apoptosis. Second, the 2 interacting cells may not fuse entirely and simply exchange plasma membrane lipids, after a sort of hemifusion process, followed by rapid death. Third, it is possible that virus-infected cells, on the point of undergoing apoptosis, fuse with CD4-expressing cells, in which case apoptosis is rapidly transmitted from one cell to the other and thus occurs in a sort of contagious fashion. Functionally, the gp120-gp41 heterodimer allows rapid transcytosis of the virus through CD4 negative cells such as simple epithelial monolayers of the intestinal, rectal and endocervical epithelial barriers. Both gp120 and gp41 specifically recognize glycosphingolipids galactosyl-ceramide (GalCer) or 3' sulfo-galactosyl-ceramide (GalS) present in the lipid rafts structures of epithelial cells. Binding to these alternative receptors allows the rapid transcytosis of the virus through the epithelial cells. This transcytotic vesicle-mediated transport of virions from the apical side to the basolateral side of the epithelial cells does not involve infection of the cells themselves. In Homo sapiens (Human), this protein is Envelope glycoprotein gp160 (env).